The chain runs to 1524 residues: DNA-directed RNA polymerase subunit beta' (1524 aa).

Zn(2+) contacts are provided by Cys-58, Cys-60, Cys-73, and Cys-76. Mg(2+) contacts are provided by Asp-739, Asp-741, and Asp-743. Cys-1112, Cys-1194, Cys-1201, and Cys-1204 together coordinate Zn(2+). The tract at residues 1501–1524 (EAVEAKERPAARRGVKREQPGKQA) is disordered.

It belongs to the RNA polymerase beta' chain family. As to quaternary structure, the RNAP catalytic core consists of 2 alpha, 1 beta, 1 beta' and 1 omega subunit. When a sigma factor is associated with the core the holoenzyme is formed, which can initiate transcription. The cofactor is Mg(2+). Requires Zn(2+) as cofactor.

It catalyses the reaction RNA(n) + a ribonucleoside 5'-triphosphate = RNA(n+1) + diphosphate. Its function is as follows. DNA-dependent RNA polymerase catalyzes the transcription of DNA into RNA using the four ribonucleoside triphosphates as substrates. The chain is DNA-directed RNA polymerase subunit beta' from Thermus thermophilus (strain ATCC BAA-163 / DSM 7039 / HB27).